Here is a 244-residue protein sequence, read N- to C-terminus: MATWKFIIRSVLFFLDLAMLLAALALIAVGFWMGYDSSFDTDLKNVIYKYDDPKSLADAKFNIRVWLIVVFWSIIGLSLGAVVTAVLGMISSVWPKRKGFMITYLVLIIVLVSLEIGCGVAVLVRRNSLHDNTNSLIDAMYTTNSVNDLKIIQDKYNCCGIENSLFNVMYCGPMSQKPHCDVAVFDSVDNTMMISGIILLVILILQTIAIILPVPILISRKKTYKYSYEPRVTQLADITEDTRF.

The next 4 helical transmembrane spans lie at 11–31 (VLFF…AVGF), 67–87 (LIVV…TAVL), 104–124 (YLVL…AVLV), and 198–218 (ILLV…PILI).

Belongs to the tetraspanin (TM4SF) family.

It is found in the membrane. The chain is Tetraspanin-1 (tsp-1) from Caenorhabditis elegans.